The chain runs to 346 residues: Calcium uniporter protein, mitochondrial (346 aa).

Residues 1 to 195 (MTKGKLLTTP…ECDKAAHRGA (195 aa)) lie on the Mitochondrial matrix side of the membrane. The tract at residues 55 to 120 (ELPPPDPQDS…GEGKDEGEFV (66 aa)) is disordered. Composition is skewed to basic and acidic residues over residues 76–91 (MEAK…KADT) and 109–119 (REGEGKDEGEF). Residues 196 to 216 (QRIALAGCGGLIGYWYIVYRL) traverse the membrane as a helical segment. The Mitochondrial intermembrane segment spans residues 217 to 226 (TFETDLGWDV). A Selectivity filter motif is present at residues 224–232 (WDVMEPVTY). A helical membrane pass occupies residues 227–248 (MEPVTYLVGLSTLIGGYMWFLW). Glu228 is a Ca(2+) binding site. Residues 249–346 (HNREVSYRSA…KEGEEDDEDD (98 aa)) lie on the Mitochondrial matrix side of the membrane. A disordered region spans residues 306–346 (WNETQDEGGDEKVTKALRDERKNNNGTKNKSKEGEEDDEDD). Residues 315-328 (DEKVTKALRDERKN) show a composition bias toward basic and acidic residues.

This sequence belongs to the MCU (TC 1.A.77) family. In terms of assembly, homotetramer, assembles in a dimer or dimers configuration with two interfaces.

The protein resides in the mitochondrion inner membrane. The catalysed reaction is Ca(2+)(in) = Ca(2+)(out). Functionally, highly selective calcium channel localized to the inner mitochondrial membrane, which mediates calcium uptake into the mitochondrial matrix. Mitochondrial calcium homeostasis plays key roles in cellular physiology and regulates ATP production, cytoplasmic calcium signals and activation of cell death pathways. Sufficient to operate as a pore-forming channel without the need of calcium-sensor or auxiliary subunit. This Cyphellophora europaea (strain CBS 101466) (Phialophora europaea) protein is Calcium uniporter protein, mitochondrial.